A 111-amino-acid polypeptide reads, in one-letter code: Large ribosomal subunit protein uL22 (111 aa).

This sequence belongs to the universal ribosomal protein uL22 family. Part of the 50S ribosomal subunit.

Its function is as follows. This protein binds specifically to 23S rRNA; its binding is stimulated by other ribosomal proteins, e.g. L4, L17, and L20. It is important during the early stages of 50S assembly. It makes multiple contacts with different domains of the 23S rRNA in the assembled 50S subunit and ribosome. The globular domain of the protein is located near the polypeptide exit tunnel on the outside of the subunit, while an extended beta-hairpin is found that lines the wall of the exit tunnel in the center of the 70S ribosome. In Clostridioides difficile (strain 630) (Peptoclostridium difficile), this protein is Large ribosomal subunit protein uL22.